A 292-amino-acid chain; its full sequence is Protoheme IX farnesyltransferase (292 aa).

A run of 8 helical transmembrane segments spans residues 15–35, 49–69, 104–124, 147–167, 171–191, 218–238, 242–262, and 271–291; these read YLVL…LGGM, FWTL…NMVI, VFSL…LVAL, IGGI…SGSV, AIAL…VLAL, TLLY…TGLV, YFVV…KFFF, and LFFF…VDMV.

The protein belongs to the UbiA prenyltransferase family. Protoheme IX farnesyltransferase subfamily.

It localises to the cell inner membrane. It carries out the reaction heme b + (2E,6E)-farnesyl diphosphate + H2O = Fe(II)-heme o + diphosphate. The protein operates within porphyrin-containing compound metabolism; heme O biosynthesis; heme O from protoheme: step 1/1. Functionally, converts heme B (protoheme IX) to heme O by substitution of the vinyl group on carbon 2 of heme B porphyrin ring with a hydroxyethyl farnesyl side group. The sequence is that of Protoheme IX farnesyltransferase from Aquifex aeolicus (strain VF5).